We begin with the raw amino-acid sequence, 82 residues long: ATP synthase subunit c (82 aa).

The next 2 helical transmembrane spans lie at 7 to 27 and 57 to 77; these read AASV…PGIG and LAFM…LLFA.

Belongs to the ATPase C chain family. F-type ATPases have 2 components, F(1) - the catalytic core - and F(0) - the membrane proton channel. F(1) has five subunits: alpha(3), beta(3), gamma(1), delta(1), epsilon(1). F(0) has four main subunits: a(1), b(1), b'(1) and c(10-14). The alpha and beta chains form an alternating ring which encloses part of the gamma chain. F(1) is attached to F(0) by a central stalk formed by the gamma and epsilon chains, while a peripheral stalk is formed by the delta, b and b' chains.

Its subcellular location is the cellular thylakoid membrane. Its function is as follows. F(1)F(0) ATP synthase produces ATP from ADP in the presence of a proton or sodium gradient. F-type ATPases consist of two structural domains, F(1) containing the extramembraneous catalytic core and F(0) containing the membrane proton channel, linked together by a central stalk and a peripheral stalk. During catalysis, ATP synthesis in the catalytic domain of F(1) is coupled via a rotary mechanism of the central stalk subunits to proton translocation. Key component of the F(0) channel; it plays a direct role in translocation across the membrane. A homomeric c-ring of between 10-14 subunits forms the central stalk rotor element with the F(1) delta and epsilon subunits. This Synechococcus sp. (strain WH7803) protein is ATP synthase subunit c.